The sequence spans 309 residues: Dihydroorotate dehydrogenase B (NAD(+)), catalytic subunit (309 aa).

FMN is bound by residues S21 and 45 to 46 (KA). Residues K45 and 69–73 (NAIGL) contribute to the substrate site. FMN contacts are provided by N99 and N127. N127 provides a ligand contact to substrate. The active-site Nucleophile is C130. Residues K165 and I191 each contribute to the FMN site. 192–193 (NT) contributes to the substrate binding site. FMN is bound by residues G217, 243–244 (GG), and 265–266 (GT).

It belongs to the dihydroorotate dehydrogenase family. Type 1 subfamily. In terms of assembly, heterotetramer of 2 PyrK and 2 PyrD type B subunits. Requires FMN as cofactor.

It localises to the cytoplasm. It catalyses the reaction (S)-dihydroorotate + NAD(+) = orotate + NADH + H(+). It participates in pyrimidine metabolism; UMP biosynthesis via de novo pathway; orotate from (S)-dihydroorotate (NAD(+) route): step 1/1. In terms of biological role, catalyzes the conversion of dihydroorotate to orotate with NAD(+) as electron acceptor. This Bacillus cereus (strain B4264) protein is Dihydroorotate dehydrogenase B (NAD(+)), catalytic subunit (pyrD).